We begin with the raw amino-acid sequence, 231 residues long: NADH-ubiquinone oxidoreductase chain 4 (231 aa).

Transmembrane regions (helical) follow at residues 1–21 (PIAG…YGII), 34–54 (MFLP…LTCL), 63–85 (IAYS…TPWG), 89–111 (AMAL…NTTY), 128–148 (ILPM…ATPP), and 156–176 (LLIM…LGLS).

It belongs to the complex I subunit 4 family.

The protein localises to the mitochondrion membrane. The enzyme catalyses a ubiquinone + NADH + 5 H(+)(in) = a ubiquinol + NAD(+) + 4 H(+)(out). Functionally, core subunit of the mitochondrial membrane respiratory chain NADH dehydrogenase (Complex I) that is believed to belong to the minimal assembly required for catalysis. Complex I functions in the transfer of electrons from NADH to the respiratory chain. The immediate electron acceptor for the enzyme is believed to be ubiquinone. This Bothriechis lateralis (Side-striped palm pitviper) protein is NADH-ubiquinone oxidoreductase chain 4 (MT-ND4).